The primary structure comprises 775 residues: Suppressor of glycerol defect protein 1 (775 aa).

Basic residues-rich tracts occupy residues 1-11 (MRPIKKSRSLK) and 28-49 (RRGK…RISR). Disordered regions lie at residues 1–101 (MRPI…LLDP) and 152–253 (IDDI…GGDK). 3 stretches are compositionally biased toward basic and acidic residues: residues 52–79 (NGYE…DAHR), 177–193 (TGDH…REGN), and 209–223 (DEFH…RMDP). Residues 262 to 463 (RRKLQGSLNK…ESITNLKENK (202 aa)) form the MIF4G domain. Residues 565 to 689 (TLRTSIFVAL…PLTILKHVDF (125 aa)) enclose the MI domain.

Belongs to the CWC22 family.

It localises to the nucleus. The protein resides in the nucleolus. Its function is as follows. Involved in osmoregulatory glycerol response. The sequence is that of Suppressor of glycerol defect protein 1 (sgd1) from Schizosaccharomyces pombe (strain 972 / ATCC 24843) (Fission yeast).